The sequence spans 1338 residues: Insulin receptor substrate 2 (1338 aa).

Residues 1 to 12 show a composition bias toward pro residues; it reads MASPPRHGPPGP. Disordered stretches follow at residues 1–31 and 49–72; these read MASP…NHSV and VLRG…QPPR. The PH domain occupies 16–144; that stretch reads DGPNLNNNNN…WYRALTDLVS (129 aa). Residues 19-28 show a composition bias toward low complexity; that stretch reads NLNNNNNNNN. Positions 53–66 are enriched in gly residues; that stretch reads PGAGGDEATAGGGS. Positions 194–298 constitute an IRS-type PTB domain; sequence YREVWQVNLK…EAMKALKELF (105 aa). Positions 303 to 411 are disordered; that stretch reads RSKSQSSGSS…SHTLSGGCGG (109 aa). Ser-306 and Ser-346 each carry phosphoserine. Thr-350 bears the Phosphothreonine mark. Phosphoserine is present on residues Ser-365, Ser-384, Ser-388, and Ser-391. At Arg-412 the chain carries Omega-N-methylarginine. A disordered region spans residues 428 to 537; it reads SRSMSMPVAH…PPARDGGGGG (110 aa). Positions 444–453 are enriched in low complexity; sequence SPGSLSSSSG. Positions 459–471 are enriched in pro residues; sequence YPPPPGPHPPLPH. Residues 475–493 show a composition bias toward low complexity; that stretch reads HGPGQRPSSGSASASGSPS. A Phosphothreonine modification is found at Thr-520. Ser-523 carries the post-translational modification Phosphoserine. Phosphothreonine is present on Thr-527. Tyr-540 carries the phosphotyrosine; by INSR modification. Positions 540 to 543 match the YXXM motif 1 motif; the sequence is YGYM. Ser-560 carries the post-translational modification Phosphoserine; by PLK1. At Ser-577 the chain carries Phosphoserine. Thr-579 and Thr-580 each carry phosphothreonine. Ser-594 is modified (phosphoserine). Residues 598-601 carry the YXXM motif 2 motif; it reads YTLM. Ser-608 and Ser-620 each carry phosphoserine. Residues Tyr-653 and Tyr-675 each carry the phosphotyrosine; by INSR modification. Short sequence motifs (YXXM motif) lie at residues 653-656 and 675-678; these read YMPM. A phosphoserine mark is found at Ser-679 and Ser-682. A compositionally biased stretch (low complexity) spans 703–719; that stretch reads PSAGPAGPAPTSAAGRT. The tract at residues 703-739 is disordered; that stretch reads PSAGPAGPAPTSAAGRTFPASGGGYKASSPAESSPED. Phosphoserine occurs at positions 735 and 736. The YXXM motif 5 motif lies at 742–745; sequence YMRM. At Ser-770 the chain carries Phosphoserine. The residue at position 779 (Thr-779) is a Phosphothreonine. Residue Ser-805 is modified to Phosphoserine. The short motif at 823–826 is the YXXM motif 6 element; that stretch reads YVLM. The residue at position 828 (Ser-828) is a Phosphoserine. The disordered stretch occupies residues 840–1101; that stretch reads EPQATPGPSQ…KPEAARVASP (262 aa). A compositionally biased stretch (pro residues) spans 859–870; the sequence is TQPPHPVVPSPV. Ser-915 bears the Phosphoserine mark. Tyr-919 bears the Phosphotyrosine; by INSR mark. The segment covering 938–967 has biased composition (low complexity); that stretch reads LLASAASSSSLLSASSPASSLGSGTPGTSS. Ser-973 is modified (phosphoserine). Phosphotyrosine; by INSR is present on Tyr-978. A compositionally biased stretch (pro residues) spans 1013-1022; that stretch reads PYPPLPPRPS. The short motif at 1072–1075 is the YXXM motif 7 element; it reads YTEM. Thr-1082 is modified (phosphothreonine). The span at 1083 to 1093 shows a compositional bias: pro residues; it reads PPQPIAAPPKP. At Ser-1100 the chain carries Phosphoserine. At Ser-1109 the chain carries Phosphoserine; by PLK1. The tract at residues 1121-1296 is disordered; that stretch reads LQASQPPDPH…TRSLGGLISA (176 aa). Low complexity predominate over residues 1150-1165; that stretch reads ETFSSTTTVTPVSPSF. Thr-1159 carries the post-translational modification Phosphothreonine. Ser-1162, Ser-1174, Ser-1176, and Ser-1186 each carry phosphoserine. Polar residues predominate over residues 1174–1183; sequence SASVENVSLR. The segment covering 1188–1198 has biased composition (gly residues); that stretch reads GGVGVGPGGGD. Ser-1203 bears the Phosphoserine mark. Positions 1224–1236 are enriched in gly residues; the sequence is QPGGLVGCPGSGG. Tyr-1253 bears the Phosphotyrosine; by INSR mark. Pro residues predominate over residues 1263–1277; sequence GLPPQPQPPPPPLPQ. Residue Lys-1331 forms a Glycyl lysine isopeptide (Lys-Gly) (interchain with G-Cter in ubiquitin) linkage.

As to quaternary structure, interacts with PHIP. Interacts with SH2B1; this interaction enhances leptin-induced activation of the PI3-kinase pathway. Interacts with GRB2. Interacts with PIK3R1. Interacts with DVL2; this interaction promotes the Wnt/beta-catenin signaling pathway. Post-translationally, phosphorylation fluctuates in a cell-cycle dependent manner with hyperphosphorylation during mitosis. Phosphorylated at Ser-560 and Ser-1109 by PLK1; these phosphorylations prevent the activation of the PI3K pathway upon growth factor stimulation by inhibiting the binding between IRS2 and the PI3K pathway components and increasing the level of IRS2 protein degradation. In addition, they prevent premature mitotic exit. Monoubiquitinated by NEDD4; leading to enhanced IGF1 signaling. During cell cycle, ubiquitination and proteasomal degradation are controlled by FZR1.

It is found in the cytoplasm. Its subcellular location is the cytosol. Signaling adapter protein that participates in the signal transduction from two prominent receptor tyrosine kinases, insulin receptor/INSR and insulin-like growth factor I receptor/IGF1R. Plays therefore an important role in development, growth, glucose homeostasis as well as lipid metabolism. Upon phosphorylation by the insulin receptor, functions as a signaling scaffold that propagates insulin action through binding to SH2 domain-containing proteins including the p85 regulatory subunit of PI3K, NCK1, NCK2, GRB2 or SHP2. Recruitment of GRB2 leads to the activation of the guanine nucleotide exchange factor SOS1 which in turn triggers the Ras/Raf/MEK/MAPK signaling cascade. Activation of the PI3K/AKT pathway is responsible for most of insulin metabolic effects in the cell, and the Ras/Raf/MEK/MAPK is involved in the regulation of gene expression and in cooperation with the PI3K pathway regulates cell growth and differentiation. Acts a positive regulator of the Wnt/beta-catenin signaling pathway through suppression of DVL2 autophagy-mediated degradation leading to cell proliferation. Plays a role in cell cycle progression by promoting a robust spindle assembly checkpoint (SAC) during M-phase. In macrophages, IL4-induced tyrosine phosphorylation of IRS2 leads to the recruitment and activation of phosphoinositide 3-kinase (PI3K). In Homo sapiens (Human), this protein is Insulin receptor substrate 2 (IRS2).